A 249-amino-acid chain; its full sequence is MSSVNVDFEQAGELKIGQVGIANLRIRTLDVPRLVREMQDRVTRAPKLFGRAAVILDFGGLAQAPDLATAKALLDGLRSAGVLPVALAYGTSEIDLLSQQLGIPLLAKFRAQYETAAVRPPQPPPPPHARAEPAAPVARPAPVRMQRNTVRSGQQLYAENCDLTVLSTVGAGAEVIADGSIHIYGTLRGRALAGAQGNPDARIFCRDFHAELVAIAGHYKVLDDVPMDLRGKAVQVWLEQDQIKIAALD.

Residues 117–138 form a disordered region; sequence AVRPPQPPPPPHARAEPAAPVA.

Belongs to the MinC family. Interacts with MinD and FtsZ.

In terms of biological role, cell division inhibitor that blocks the formation of polar Z ring septums. Rapidly oscillates between the poles of the cell to destabilize FtsZ filaments that have formed before they mature into polar Z rings. Prevents FtsZ polymerization. This chain is Probable septum site-determining protein MinC, found in Xanthomonas campestris pv. campestris (strain 8004).